The sequence spans 254 residues: Ankyrin repeat domain-containing protein 7 (254 aa).

5 ANK repeats span residues 58-87, 91-120, 124-153, 157-186, and 190-219; these read KYRT…KINV, ENKS…DPDL, RYNT…DLEA, DGYT…DVNA, and YQRT…ELCY.

Testis specific.

In Homo sapiens (Human), this protein is Ankyrin repeat domain-containing protein 7 (ANKRD7).